Consider the following 129-residue polypeptide: M-zodatoxin-Lt8f (129 aa).

Positions 1–20 (MKYFVVALALVAAFACIAES) are cleaved as a signal peptide. A propeptide spanning residues 21 to 60 (KPAESEHELAEVEEENELADLEDAVWLEHLADLSDLEEAR) is cleaved from the precursor. Residues 57-60 (EEAR) carry the Processing quadruplet motif motif.

In terms of processing, cleavage of the propeptide depends on the processing quadruplet motif (XXXR, with at least one of X being E). In terms of tissue distribution, expressed by the venom gland.

The protein localises to the secreted. Functionally, insecticidal, cytolytic and antimicrobial peptide. Has insecticidal activity against the flesh fly S.carnaria. Has antibacterial activity against the Gram-negative bacteria E.coli. Forms voltage-dependent, ion-permeable channels in membranes. At high concentration causes cell membrane lysis. The chain is M-zodatoxin-Lt8f (cit 1-7) from Lachesana tarabaevi (Spider).